The following is a 147-amino-acid chain: Hemoglobin subunit beta (147 aa).

A Globin domain is found at 2–147 (ELTEAQRGAI…VVSALGKQYH (146 aa)). H63 and H92 together coordinate heme b.

The protein belongs to the globin family. In terms of assembly, heterotetramer of two alpha chains and two beta chains. Red blood cells.

Its function is as follows. Involved in oxygen transport from gills to the various peripheral tissues. In Electrophorus electricus (Electric eel), this protein is Hemoglobin subunit beta (hbb).